Reading from the N-terminus, the 363-residue chain is MKATIRNKLERMAERHEEIGAQLADPDVVGDPSKFAELSREYARLEPVVQDLNAYRAEADTVASAEAMLNDGDAEIRALAEQELAEAQRRLEELEGALQRHLVPTDPNDQRNIFLEVRAGAGGDEAALFAGDLLRMYMRYAERQGWKTEILSAREGEHGGYREVIARVSGRSVYARLKFESGAHRVQRVPATESQGRIHTSACTVAILPELDEVSAIEVNTADLRVDTFRSSGAGGQHVNTTDSAIRITHLPSGLVVECQDERSQNKNRAKAIALLQARLTEQERAKQQSERSEQRRLAVGSGDRSERIRTYNFPQGRVTDHRIGLTLYKLEQVMEGGMDELLDGLTQEHQAEALAEIAEDSG.

Gln237 is modified (N5-methylglutamine). A compositionally biased stretch (basic and acidic residues) spans 284–297 (ERAKQQSERSEQRR). The interval 284 to 306 (ERAKQQSERSEQRRLAVGSGDRS) is disordered.

Belongs to the prokaryotic/mitochondrial release factor family. Methylated by PrmC. Methylation increases the termination efficiency of RF1.

The protein resides in the cytoplasm. Its function is as follows. Peptide chain release factor 1 directs the termination of translation in response to the peptide chain termination codons UAG and UAA. The sequence is that of Peptide chain release factor 1 from Halorhodospira halophila (strain DSM 244 / SL1) (Ectothiorhodospira halophila (strain DSM 244 / SL1)).